The chain runs to 102 residues: NADH-quinone oxidoreductase subunit K 1 (102 aa).

3 helical membrane-spanning segments follow: residues 5-25 (ISHYLTVSAILFTLGVFGIFL), 31-51 (IIILMSVELILLAVNINMVAF), and 65-85 (LFILTVAAAEAAIGLAILVVF).

The protein belongs to the complex I subunit 4L family. As to quaternary structure, NDH-1 is composed of 14 different subunits. Subunits NuoA, H, J, K, L, M, N constitute the membrane sector of the complex.

Its subcellular location is the cell inner membrane. It catalyses the reaction a quinone + NADH + 5 H(+)(in) = a quinol + NAD(+) + 4 H(+)(out). Its function is as follows. NDH-1 shuttles electrons from NADH, via FMN and iron-sulfur (Fe-S) centers, to quinones in the respiratory chain. The immediate electron acceptor for the enzyme in this species is believed to be ubiquinone. Couples the redox reaction to proton translocation (for every two electrons transferred, four hydrogen ions are translocated across the cytoplasmic membrane), and thus conserves the redox energy in a proton gradient. The sequence is that of NADH-quinone oxidoreductase subunit K 1 from Rhizobium meliloti (strain 1021) (Ensifer meliloti).